The chain runs to 687 residues: Polyphosphate kinase (687 aa).

Asparagine 45 lines the ATP pocket. Mg(2+)-binding residues include arginine 375 and arginine 405. Histidine 435 (phosphohistidine intermediate) is an active-site residue. Residues tyrosine 472, arginine 568, and histidine 596 each contribute to the ATP site.

Belongs to the polyphosphate kinase 1 (PPK1) family. Requires Mg(2+) as cofactor. An intermediate of this reaction is the autophosphorylated ppk in which a phosphate is covalently linked to a histidine residue through a N-P bond.

It catalyses the reaction [phosphate](n) + ATP = [phosphate](n+1) + ADP. Catalyzes the reversible transfer of the terminal phosphate of ATP to form a long-chain polyphosphate (polyP). The chain is Polyphosphate kinase from Burkholderia ambifaria (strain MC40-6).